Reading from the N-terminus, the 59-residue chain is Large ribosomal subunit protein uL30 (59 aa).

It belongs to the universal ribosomal protein uL30 family. Part of the 50S ribosomal subunit.

This is Large ribosomal subunit protein uL30 from Edwardsiella ictaluri (strain 93-146).